Here is a 470-residue protein sequence, read N- to C-terminus: ATP synthase subunit beta (470 aa).

156 to 163 (GGAGVGKT) provides a ligand contact to ATP.

It belongs to the ATPase alpha/beta chains family. F-type ATPases have 2 components, CF(1) - the catalytic core - and CF(0) - the membrane proton channel. CF(1) has five subunits: alpha(3), beta(3), gamma(1), delta(1), epsilon(1). CF(0) has three main subunits: a(1), b(2) and c(9-12). The alpha and beta chains form an alternating ring which encloses part of the gamma chain. CF(1) is attached to CF(0) by a central stalk formed by the gamma and epsilon chains, while a peripheral stalk is formed by the delta and b chains.

The protein localises to the cell inner membrane. The catalysed reaction is ATP + H2O + 4 H(+)(in) = ADP + phosphate + 5 H(+)(out). Functionally, produces ATP from ADP in the presence of a proton gradient across the membrane. The catalytic sites are hosted primarily by the beta subunits. In Thermosipho africanus (strain TCF52B), this protein is ATP synthase subunit beta.